We begin with the raw amino-acid sequence, 448 residues long: NADP-specific glutamate dehydrogenase (448 aa).

Residues lysine 88, glutamine 109, and lysine 112 each contribute to the substrate site. Catalysis depends on lysine 124, which acts as the Proton donor. Position 163 (glycine 163) interacts with substrate. NADP(+) is bound by residues threonine 207 and asparagine 238. Serine 381 serves as a coordination point for substrate.

It belongs to the Glu/Leu/Phe/Val dehydrogenases family. As to quaternary structure, homohexamer.

The catalysed reaction is L-glutamate + NADP(+) + H2O = 2-oxoglutarate + NH4(+) + NADPH + H(+). Functionally, catalyzes the reversible oxidative deamination of glutamate to alpha-ketoglutarate and ammonia. The protein is NADP-specific glutamate dehydrogenase (gdhA) of Helicobacter pylori (strain J99 / ATCC 700824) (Campylobacter pylori J99).